A 370-amino-acid chain; its full sequence is Peptidoglycan glycosyltransferase MrdB (370 aa).

Helical transmembrane passes span 20 to 40, 50 to 70, 75 to 95, 136 to 156, 160 to 180, 183 to 203, 263 to 283, 312 to 332, and 336 to 356; these read MLLILLALLVYSALVIWSASG, IGQIAMGLVIMVVMAQIPPRV, APYLYIICIILLVAVDAFGAI, SLKNTGIALVLIFMPTLLVAA, LGTSILVALSGLFVLFLSGLS, LIGVAVVLVAAFIPILWFFLM, FIFAVLAEELGLVGILILLAL, LILFVYVFVNIGMVSGILPVV, and LPLVSYGGSALIVLMAGFGIV.

Belongs to the SEDS family. MrdB/RodA subfamily.

Its subcellular location is the cell inner membrane. It catalyses the reaction [GlcNAc-(1-&gt;4)-Mur2Ac(oyl-L-Ala-gamma-D-Glu-L-Lys-D-Ala-D-Ala)](n)-di-trans,octa-cis-undecaprenyl diphosphate + beta-D-GlcNAc-(1-&gt;4)-Mur2Ac(oyl-L-Ala-gamma-D-Glu-L-Lys-D-Ala-D-Ala)-di-trans,octa-cis-undecaprenyl diphosphate = [GlcNAc-(1-&gt;4)-Mur2Ac(oyl-L-Ala-gamma-D-Glu-L-Lys-D-Ala-D-Ala)](n+1)-di-trans,octa-cis-undecaprenyl diphosphate + di-trans,octa-cis-undecaprenyl diphosphate + H(+). It participates in cell wall biogenesis; peptidoglycan biosynthesis. In terms of biological role, peptidoglycan polymerase that is essential for cell wall elongation. The chain is Peptidoglycan glycosyltransferase MrdB from Escherichia coli O157:H7.